The sequence spans 262 residues: Ornithine carbamoyltransferase (262 aa).

Residues serine 3–arginine 7, glutamine 30, arginine 54, and histidine 81–glutamine 84 contribute to the carbamoyl phosphate site. L-ornithine contacts are provided by residues asparagine 114, aspartate 178, and serine 182–methionine 183. Residues histidine 219 to proline 222 and threonine 247 each bind carbamoyl phosphate.

Belongs to the aspartate/ornithine carbamoyltransferase superfamily. OTCase family.

It localises to the cytoplasm. The enzyme catalyses carbamoyl phosphate + L-ornithine = L-citrulline + phosphate + H(+). The protein operates within amino-acid biosynthesis; L-arginine biosynthesis; L-arginine from L-ornithine and carbamoyl phosphate: step 1/3. Functionally, reversibly catalyzes the transfer of the carbamoyl group from carbamoyl phosphate (CP) to the N(epsilon) atom of ornithine (ORN) to produce L-citrulline. The sequence is that of Ornithine carbamoyltransferase (argF) from Neisseria mucosa.